The following is a 167-amino-acid chain: Cytochrome c-type biogenesis protein CcmE (167 aa).

Residues 1–7 (MTRKTRR) lie on the Cytoplasmic side of the membrane. Residues 8-28 (LWIVIACLACVGSAAALTLRA) traverse the membrane as a helical; Signal-anchor for type II membrane protein segment. Residues 29-167 (FSSNIVFFMA…DTMTAKKAGG (139 aa)) are Periplasmic-facing. Positions 125 and 129 each coordinate heme. Over residues 141–150 (TGKWDPRFGK) the composition is skewed to basic and acidic residues. The disordered stretch occupies residues 141–167 (TGKWDPRFGKAPDASSWDTMTAKKAGG).

It belongs to the CcmE/CycJ family.

It localises to the cell inner membrane. In terms of biological role, heme chaperone required for the biogenesis of c-type cytochromes. Transiently binds heme delivered by CcmC and transfers the heme to apo-cytochromes in a process facilitated by CcmF and CcmH. This chain is Cytochrome c-type biogenesis protein CcmE, found in Gluconobacter oxydans (strain 621H) (Gluconobacter suboxydans).